We begin with the raw amino-acid sequence, 618 residues long: Uptake hydrogenase large subunit (618 aa).

C75, C78, C597, and C600 together coordinate Ni(2+).

This sequence belongs to the [NiFe]/[NiFeSe] hydrogenase large subunit family. As to quaternary structure, heterodimer of a large and a small subunit. The cofactor is Ni(2+).

The protein resides in the cell membrane. The enzyme catalyses H2 + A = AH2. This enzyme recycles the H(2) produced by nitrogenase to increase the production of ATP and to protect nitrogenase against inhibition or damage by O(2) under carbon- or phosphate-limited conditions. The protein is Uptake hydrogenase large subunit (hoxG) of Cupriavidus necator (strain ATCC 17699 / DSM 428 / KCTC 22496 / NCIMB 10442 / H16 / Stanier 337) (Ralstonia eutropha).